A 347-amino-acid chain; its full sequence is MAIDEDKQKAISLAIKQIDKVFGKGALVRLGDKQVEKIDAISTGSLGLDLALGIGGVPKGRIIEIYGPESSGKTTLSLHIIAECQKNGGVCAFIDAEHALDVYYAKRLGVDTENLLVSQPSTGEEALEILETITRSGGIDLVVVDSVAALTPKAEIDGDMGDQHVGLQARLMSHALRKITGVLHKMNTTLIFINQIRMKIGMMGYGSPETTTGGNALKFYASVRIDIRRIASLKQNEQHIGNRAKAKVVKNKVAPPFREAEFDIMFGEGISKEGEIIDYGVKLDIVDKSGAWLSYQDKKLGQGRENAKALLKEDKALADEITLKIKESIGSNEEIMPLPDEPLEEME.

Position 67–74 (67–74 (GPESSGKT)) interacts with ATP.

It belongs to the RecA family.

It localises to the cytoplasm. Its function is as follows. Can catalyze the hydrolysis of ATP in the presence of single-stranded DNA, the ATP-dependent uptake of single-stranded DNA by duplex DNA, and the ATP-dependent hybridization of homologous single-stranded DNAs. It interacts with LexA causing its activation and leading to its autocatalytic cleavage. The chain is Protein RecA from Helicobacter pylori (strain P12).